The primary structure comprises 261 residues: Ethanolamine ammonia-lyase small subunit (261 aa).

Residues Val-157, Glu-178, and Cys-207 each coordinate adenosylcob(III)alamin.

The protein belongs to the EutC family. The basic unit is a heterodimer which dimerizes to form tetramers. The heterotetramers trimerize; 6 large subunits form a core ring with 6 small subunits projecting outwards. It depends on adenosylcob(III)alamin as a cofactor.

Its subcellular location is the bacterial microcompartment. It catalyses the reaction ethanolamine = acetaldehyde + NH4(+). It functions in the pathway amine and polyamine degradation; ethanolamine degradation. Functionally, catalyzes the deamination of various vicinal amino-alcohols to oxo compounds. Allows this organism to utilize ethanolamine as the sole source of nitrogen and carbon in the presence of external vitamin B12. The chain is Ethanolamine ammonia-lyase small subunit from Rhodopseudomonas palustris (strain BisA53).